We begin with the raw amino-acid sequence, 401 residues long: ATP phosphoribosyltransferase regulatory subunit (401 aa).

The disordered stretch occupies residues 373-401 (PGQQGGAAAQGCDRRLQQDDGGGWVTRPL). Gly residues predominate over residues 392 to 401 (DGGGWVTRPL).

Belongs to the class-II aminoacyl-tRNA synthetase family. HisZ subfamily. As to quaternary structure, heteromultimer composed of HisG and HisZ subunits.

It localises to the cytoplasm. The protein operates within amino-acid biosynthesis; L-histidine biosynthesis; L-histidine from 5-phospho-alpha-D-ribose 1-diphosphate: step 1/9. Its function is as follows. Required for the first step of histidine biosynthesis. May allow the feedback regulation of ATP phosphoribosyltransferase activity by histidine. The protein is ATP phosphoribosyltransferase regulatory subunit of Alkalilimnicola ehrlichii (strain ATCC BAA-1101 / DSM 17681 / MLHE-1).